The chain runs to 85 residues: MEASSEPPLDAKSDVTNQLVDFQWKLGMAVSSDTCRSLKYPYVAVMLKVADHSGQVKTKCFEMTIPQFQNFYRQFKEIAAVIETV.

Met1 is subject to N-acetylmethionine. One can recognise a COMM domain in the interval 18-85 (QLVDFQWKLG…KEIAAVIETV (68 aa)).

The protein belongs to the COMM domain-containing protein 6 family. As to quaternary structure, component of the commander complex consisting of the CCC subcomplex and the retriever subcomplex. Component of the CCC (COMMD/CCDC22/CCDC93) subcomplex consisting of COMMD1, COMMD2, COMMD3, COMMD4, COMMD5, COMMD6, COMMD7, COMMD8, COMMD9, COMMD10, CCDC22 and CCDC93; within the complex forms a heterodimer with COMMD1. May form a homodimer with isoform 1. Interacts with RELA, RELB, NFKB1/p105. Does not interact with NFKBIB. Interacts with CCDC22, CCDC93, SCNN1B, CUL4A. As to expression, ubiquitous. Expressed in brain, heart, skeletal muscle, lung, pancreas, liver, kidney, small intestine and placenta.

The protein localises to the nucleus. The protein resides in the cytoplasm. In terms of biological role, scaffold protein in the commander complex that is essential for endosomal recycling of transmembrane cargos; the commander complex is composed of the CCC subcomplex and the retriever subcomplex. May modulate activity of cullin-RING E3 ubiquitin ligase (CRL) complexes. Down-regulates activation of NF-kappa-B. Inhibits TNF-induced NFKB1 activation. The chain is COMM domain-containing protein 6 (COMMD6) from Homo sapiens (Human).